Consider the following 383-residue polypeptide: Smad nuclear-interacting protein 1 (383 aa).

Residues 1–10 (MKAGKSERER) show a composition bias toward basic and acidic residues. A disordered region spans residues 1–209 (MKAGKSERER…NRSKEVPVKE (209 aa)). Phosphoserine is present on S18. K28 is covalently cross-linked (Glycyl lysine isopeptide (Lys-Gly) (interchain with G-Cter in SUMO); alternate). A Glycyl lysine isopeptide (Lys-Gly) (interchain with G-Cter in SUMO1); alternate cross-link involves residue K28. Residue K28 forms a Glycyl lysine isopeptide (Lys-Gly) (interchain with G-Cter in SUMO2); alternate linkage. Positions 28–43 (KQERLSPEPVAHRRPD) are enriched in basic and acidic residues. S33, S48, and S50 each carry phosphoserine. Over residues 44-56 (APAASLSPPAAEP) the composition is skewed to low complexity. Residues 59–90 (SGHRGSRARSPAKKKSKSSGRRSKSPRTKRSQ) show a composition bias toward basic residues. S91 is modified (phosphoserine). Basic and acidic residues-rich tracts occupy residues 99–134 (VKQE…ERDR) and 143–159 (RSSD…DRDS). K100 is covalently cross-linked (Glycyl lysine isopeptide (Lys-Gly) (interchain with G-Cter in SUMO2)). Residue S145 is modified to Phosphoserine. Positions 153–194 (QDRDRDSQNLQAQEEERDFHNARRREHRQQNESAGSEAQEVI) form a coiled coil. Residue K210 forms a Glycyl lysine isopeptide (Lys-Gly) (interchain with G-Cter in SUMO2) linkage. The FHA domain occupies 268–331 (YLLGRHRRIA…NGTFLNNKRI (64 aa)). Residues 359–369 (ESSDTSELDRK) show a composition bias toward basic and acidic residues. Residues 359-383 (ESSDTSELDRKEDEDDEEEEMVSDS) form a disordered region. The segment covering 370–383 (EDEDDEEEEMVSDS) has biased composition (acidic residues). Phosphoserine is present on S381.

In terms of assembly, component of activated spliceosome complexes. Binds SMAD4 and CREBBP/EP300. Component of the minor spliceosome, which splices U12-type introns. Binds the SMAD1/OAZ1/PSMB4 complex. Interacts with DROSHA and SMARCA4. Component of the SNARP complex which consists at least of SNIP1, SNW1, THRAP3, BCLAF1 and PNN. Post-translationally, degraded by the proteasome upon binding to the SMAD1/OAZ1/PSMB4 complex.

It is found in the nucleus. Required for pre-mRNA splicing as component of the spliceosome. As a component of the minor spliceosome, involved in the splicing of U12-type introns in pre-mRNAs. Down-regulates NF-kappa-B signaling by competing with RELA for CREBBP/EP300 binding. Involved in the microRNA (miRNA) biogenesis. May be involved in cyclin-D1/CCND1 mRNA stability through the SNARP complex which associates with both the 3'end of the CCND1 gene and its mRNA. This Mus musculus (Mouse) protein is Smad nuclear-interacting protein 1 (Snip1).